The following is a 316-amino-acid chain: Methionyl-tRNA formyltransferase (316 aa).

Residue 112-115 participates in (6S)-5,6,7,8-tetrahydrofolate binding; the sequence is SLLP.

It belongs to the Fmt family.

It carries out the reaction L-methionyl-tRNA(fMet) + (6R)-10-formyltetrahydrofolate = N-formyl-L-methionyl-tRNA(fMet) + (6S)-5,6,7,8-tetrahydrofolate + H(+). Attaches a formyl group to the free amino group of methionyl-tRNA(fMet). The formyl group appears to play a dual role in the initiator identity of N-formylmethionyl-tRNA by promoting its recognition by IF2 and preventing the misappropriation of this tRNA by the elongation apparatus. This chain is Methionyl-tRNA formyltransferase, found in Haemophilus ducreyi (strain 35000HP / ATCC 700724).